The following is a 261-amino-acid chain: Indole-3-glycerol phosphate synthase (261 aa).

Belongs to the TrpC family.

The catalysed reaction is 1-(2-carboxyphenylamino)-1-deoxy-D-ribulose 5-phosphate + H(+) = (1S,2R)-1-C-(indol-3-yl)glycerol 3-phosphate + CO2 + H2O. It participates in amino-acid biosynthesis; L-tryptophan biosynthesis; L-tryptophan from chorismate: step 4/5. In Burkholderia pseudomallei (strain 1106a), this protein is Indole-3-glycerol phosphate synthase.